Here is a 609-residue protein sequence, read N- to C-terminus: Glutamine--fructose-6-phosphate aminotransferase [isomerizing] (609 aa).

Cys2 (nucleophile; for GATase activity) is an active-site residue. The 217-residue stretch at 2–218 (CGIVGAVAQR…EGDVAEVTRR (217 aa)) folds into the Glutamine amidotransferase type-2 domain. SIS domains are found at residues 286–426 (AAEF…HNGM) and 458–599 (LAED…VDQP). Lys604 functions as the For Fru-6P isomerization activity in the catalytic mechanism.

Homodimer.

It is found in the cytoplasm. It carries out the reaction D-fructose 6-phosphate + L-glutamine = D-glucosamine 6-phosphate + L-glutamate. Catalyzes the first step in hexosamine metabolism, converting fructose-6P into glucosamine-6P using glutamine as a nitrogen source. This Shewanella oneidensis (strain ATCC 700550 / JCM 31522 / CIP 106686 / LMG 19005 / NCIMB 14063 / MR-1) protein is Glutamine--fructose-6-phosphate aminotransferase [isomerizing].